Consider the following 661-residue polypeptide: UvrABC system protein B (661 aa).

The 158-residue stretch at 25–182 (AGLSSKKRSQ…NDLINLQYER (158 aa)) folds into the Helicase ATP-binding domain. 38–45 (GITGSGKT) lines the ATP pocket. Positions 91 to 114 (YYDYYQPEAYIARTDTFIEKDSSI) match the Beta-hairpin motif. The region spanning 430 to 592 (QIEDLISEIQ…IIPKTINRTI (163 aa)) is the Helicase C-terminal domain. The UVR domain occupies 621–656 (KTHIDKLKKEMLKAASNLEFEQAAKLRDQLKTLEEA).

Belongs to the UvrB family. In terms of assembly, forms a heterotetramer with UvrA during the search for lesions. Interacts with UvrC in an incision complex.

It localises to the cytoplasm. The UvrABC repair system catalyzes the recognition and processing of DNA lesions. A damage recognition complex composed of 2 UvrA and 2 UvrB subunits scans DNA for abnormalities. Upon binding of the UvrA(2)B(2) complex to a putative damaged site, the DNA wraps around one UvrB monomer. DNA wrap is dependent on ATP binding by UvrB and probably causes local melting of the DNA helix, facilitating insertion of UvrB beta-hairpin between the DNA strands. Then UvrB probes one DNA strand for the presence of a lesion. If a lesion is found the UvrA subunits dissociate and the UvrB-DNA preincision complex is formed. This complex is subsequently bound by UvrC and the second UvrB is released. If no lesion is found, the DNA wraps around the other UvrB subunit that will check the other stand for damage. The polypeptide is UvrABC system protein B (Rickettsia massiliae (strain Mtu5)).